Consider the following 283-residue polypeptide: Pantothenate synthetase (283 aa).

ATP is bound at residue 31-38 (MGALHDGH). The Proton donor role is filled by H38. Q62 contacts (R)-pantoate. Q62 contributes to the beta-alanine binding site. 148–151 (GKKD) lines the ATP pocket. Residue Q154 participates in (R)-pantoate binding. Residues V177 and 185–188 (KSSR) contribute to the ATP site.

Belongs to the pantothenate synthetase family. Homodimer.

The protein resides in the cytoplasm. It carries out the reaction (R)-pantoate + beta-alanine + ATP = (R)-pantothenate + AMP + diphosphate + H(+). It participates in cofactor biosynthesis; (R)-pantothenate biosynthesis; (R)-pantothenate from (R)-pantoate and beta-alanine: step 1/1. Catalyzes the condensation of pantoate with beta-alanine in an ATP-dependent reaction via a pantoyl-adenylate intermediate. In Staphylococcus aureus (strain Mu3 / ATCC 700698), this protein is Pantothenate synthetase.